Reading from the N-terminus, the 230-residue chain is MSQSPIELKGSSFTLSVIHLHHTDPAIVRNALEEKVSQAPAFLKNAPVVINVAALSREINWRQMQQAILATGLHIVGVSGCKDERLKQTIARSGLPVLNEGKEQKNSADTPPIAALPVQTTAKTRLISTPVRSGQQIYAKDCDLIITSSVSAGAELIADGNIHIYGMMRGRALAGANGDKNCQIFCTSLSAELVSIAGNYWIMDQIPAEFFGKASRLCLQDGALTIQALN.

The protein belongs to the MinC family. Interacts with MinD and FtsZ.

Functionally, cell division inhibitor that blocks the formation of polar Z ring septums. Rapidly oscillates between the poles of the cell to destabilize FtsZ filaments that have formed before they mature into polar Z rings. Prevents FtsZ polymerization. In Erwinia tasmaniensis (strain DSM 17950 / CFBP 7177 / CIP 109463 / NCPPB 4357 / Et1/99), this protein is Probable septum site-determining protein MinC.